Here is a 132-residue protein sequence, read N- to C-terminus: uncharacterized protein (132 aa).

Disordered regions lie at residues 36–69 and 97–132; these read GLASTPSLRPRPRPWEGQLQHQSHQGSLDKPNIS and QINDSDNDNDDNNNDNNKGDGNDDDNNTVTANPTAR. Serine 101 is modified (phosphoserine).

As to quaternary structure, copurifies with proteins HOL1, MMP1, PEX7 and PLB1.

This is an uncharacterized protein from Saccharomyces cerevisiae (strain ATCC 204508 / S288c) (Baker's yeast).